The following is a 315-amino-acid chain: MFYQVLHSILSLTAVLLNAFTMYLAITKSPKIMRPCSAIITIKTATDILTSIMSFFVMQRIITDGSTILVIPTGPCINFGKTACYVGHMLMLCFLEYNLIWMISSYIFRYYILYVRQPSIKKLVFVAFCLSIPSIIHMVVWFSIYDPNEASTYLPLFGSCDMVLSGKIVYWSAITLITQLFITAFLVIVAYIWIKETLCSYATKMGAIKKDVKNFNKRLVKVINFQVFLPSFIFLGVITFASMFTGKIGYEYAQYAISVIFMFSPIISPFSYILFVPHYKNVITGKVKNPKSKPTKCNPPISTTRSTGAPFVYNI.

7 helical membrane-spanning segments follow: residues 6 to 26 (LHSI…YLAI), 38 to 58 (AIIT…FFVM), 83 to 103 (ACYV…IWMI), 124 to 144 (VFVA…WFSI), 174 to 194 (ITLI…YIWI), 225 to 245 (FQVF…SMFT), and 256 to 276 (AISV…ILFV).

The protein belongs to the nematode receptor-like protein srd family.

The protein resides in the membrane. This is Serpentine receptor class delta-31 (srd-31) from Caenorhabditis elegans.